The sequence spans 292 residues: MIQRPTFFTPTHLLAMLLATFVLITGCHREAKKNADDGMPVEHLYDKAHTLMKKGNWAGAEVSFKRLIAQYPYGPYTEQAMVENAYAQYKSGKHDDAVSSIDRFIRTYPTHHNIPYLYYLRGLSNSNRDTIFLRKVWSLDLSRRDLSAPQQAYNDFKTVLDRYPNSRYAADAKKQMTELRNMFAQYEMNVTLYYLRRTAWVAAAGRANFLLETYPQSAFQYDAVAALGEAYTHLGNKTLADNARQVLQTNAPDHPWLKGKWPKYPAAIRKLNPFAGEKSAATGQINAVVDSN.

An N-terminal signal peptide occupies residues 1–26 (MIQRPTFFTPTHLLAMLLATFVLITG). A lipid anchor (N-palmitoyl cysteine) is attached at C27. Residue C27 is the site of S-diacylglycerol cysteine attachment.

Belongs to the BamD family. In terms of assembly, part of the Bam complex.

It is found in the cell outer membrane. Part of the outer membrane protein assembly complex, which is involved in assembly and insertion of beta-barrel proteins into the outer membrane. The polypeptide is Outer membrane protein assembly factor BamD (Xylella fastidiosa (strain 9a5c)).